A 384-amino-acid chain; its full sequence is Ferrochelatase, mitochondrial (384 aa).

Residue C156 participates in [2Fe-2S] cluster binding. Catalysis depends on residues H190 and N343. [2Fe-2S] cluster-binding residues include C363, C366, and C371.

The protein belongs to the ferrochelatase family. Homodimer. Homotetramer. [2Fe-2S] cluster is required as a cofactor.

Its subcellular location is the mitochondrion inner membrane. It carries out the reaction heme b + 2 H(+) = protoporphyrin IX + Fe(2+). Its pathway is porphyrin-containing compound metabolism; protoheme biosynthesis; protoheme from protoporphyrin-IX: step 1/1. In terms of biological role, catalyzes the ferrous insertion into protoporphyrin IX. Terminal enzyme in heme biosynthesis. Contains four conserved cysteines that function as cluster ligands and play a crucial role in maintaining protein structure. This chain is Ferrochelatase, mitochondrial, found in Drosophila melanogaster (Fruit fly).